Reading from the N-terminus, the 155-residue chain is Ribosomal RNA large subunit methyltransferase H (155 aa).

S-adenosyl-L-methionine contacts are provided by residues Leu72, Gly103, and 122 to 127 (LSALTL).

Belongs to the RNA methyltransferase RlmH family. As to quaternary structure, homodimer.

The protein resides in the cytoplasm. It carries out the reaction pseudouridine(1915) in 23S rRNA + S-adenosyl-L-methionine = N(3)-methylpseudouridine(1915) in 23S rRNA + S-adenosyl-L-homocysteine + H(+). Specifically methylates the pseudouridine at position 1915 (m3Psi1915) in 23S rRNA. The chain is Ribosomal RNA large subunit methyltransferase H from Escherichia fergusonii (strain ATCC 35469 / DSM 13698 / CCUG 18766 / IAM 14443 / JCM 21226 / LMG 7866 / NBRC 102419 / NCTC 12128 / CDC 0568-73).